We begin with the raw amino-acid sequence, 377 residues long: Killer cell immunoglobulin-like receptor 2DL4 (377 aa).

Residues Met1–Val21 form the signal peptide. Topologically, residues Trp22–His242 are extracellular. Ig-like C2-type domains are found at residues Gly44–Ser104 and Gly139–Ser202. Residues Cys51 and Cys97 are joined by a disulfide bond. Asn141 and Asn175 each carry an N-linked (GlcNAc...) asparagine glycan. Cys146 and Cys195 are joined by a disulfide. The helical transmembrane segment at Ala243 to His263 threads the bilayer. Over Arg264 to Ile377 the chain is Cytoplasmic. Residues Pro338–Ile377 form a disordered region. Polar residues predominate over residues Leu352–Ile377.

It belongs to the immunoglobulin superfamily. Interacts with peptide-bound HLA-G-B2M heterotrimeric complex. Interacts with ARRB2. Expressed in decidual NK cells and innate lymphoid cell type I (ILC1). Expressed in a subset of peripheral NK cells.

Its subcellular location is the cell membrane. It localises to the early endosome membrane. Functionally, receptor for non-classical major histocompatibility class Ib HLA-G molecules. Recognizes HLA-G in complex with B2M/beta-2 microglobulin and a nonamer self-peptide (peptide-bound HLA-G-B2M). In decidual NK cells, binds peptide-bound HLA-G-B2M complex and triggers NK cell senescence-associated secretory phenotype as a molecular switch to promote vascular remodeling and fetal growth in early pregnancy. May play a role in balancing tolerance and antiviral-immunity at maternal-fetal interface by keeping in check the effector functions of NK, CD8+ T cells and B cells. Upon interaction with peptide-bound HLA-G-B2M, initiates signaling from the endosomal compartment leading to downstream activation of PRKDC-XRCC5 and AKT1, and ultimately triggering NF-kappa-B-dependent pro-inflammatory response. This Homo sapiens (Human) protein is Killer cell immunoglobulin-like receptor 2DL4.